Here is a 302-residue protein sequence, read N- to C-terminus: Oxygen-dependent coproporphyrinogen-III oxidase (302 aa).

S94 serves as a coordination point for substrate. Positions 98 and 108 each coordinate a divalent metal cation. H108 (proton donor) is an active-site residue. 110–112 lines the substrate pocket; it reads NVR. 2 residues coordinate a divalent metal cation: H147 and H177. The tract at residues 242-277 is important for dimerization; that stretch reads YVEFNLVFDRGTLFGLQSGGRTESILMSMPPVANWR. Substrate is bound at residue 260–262; sequence GGR.

This sequence belongs to the aerobic coproporphyrinogen-III oxidase family. As to quaternary structure, homodimer. Requires a divalent metal cation as cofactor.

Its subcellular location is the cytoplasm. It carries out the reaction coproporphyrinogen III + O2 + 2 H(+) = protoporphyrinogen IX + 2 CO2 + 2 H2O. The protein operates within porphyrin-containing compound metabolism; protoporphyrin-IX biosynthesis; protoporphyrinogen-IX from coproporphyrinogen-III (O2 route): step 1/1. Functionally, involved in the heme biosynthesis. Catalyzes the aerobic oxidative decarboxylation of propionate groups of rings A and B of coproporphyrinogen-III to yield the vinyl groups in protoporphyrinogen-IX. This is Oxygen-dependent coproporphyrinogen-III oxidase from Ralstonia nicotianae (strain ATCC BAA-1114 / GMI1000) (Ralstonia solanacearum).